Consider the following 93-residue polypeptide: LSM complex subunit LSM5 (93 aa).

Positions 7–87 constitute a Sm domain; sequence LPLEVIDKTI…IAILVPGGKK (81 aa).

The protein belongs to the snRNP Sm proteins family. Component of the heptameric LSM1-LSM7 complex that forms a seven-membered ring structure with a donut shape. The LSm subunits are arranged in the order LSM1, LSM2, LSM3, LSM6, LSM5, LSM7 and LSM4. Except for LSM1, where a C-terminal helix crosses the ring structure to form additional interactions with LSM3 and LSM6, each subunit interacts only with its two neighboring subunits. The LSM1-LSM7 complex interacts with PAT1; within the complex PAT1 has direct interactions with LSM2 and LSM3. The LSM1-LSM7 complex interacts with XRN1. Component of the heptameric LSM2-LSM8 complex that forms a seven-membered ring structure with a donut shape; an RNA strand can pass through the hole in the center of the ring structure. The LSm subunits are arranged in the order LSM8, LSM2, LSM3, LSM6, LSM5, LSM7 and LSM4. Component of the spliceosome U4/U6-U5 tri-snRNP complex composed of the U4, U6 and U5 snRNAs and at least PRP3, PRP4, PRP6, PRP8, PRP18, PRP31, PRP38, SNU13, SNU23, SNU66, SNU114, SPP381, SMB1, SMD1, SMD2, SMD3, SMX2, SMX3, LSM2, LSM3, LSM4, LSM5, LSM6, LSM7, LSM8, BRR2 and DIB1. May be found in a complex comprising LSM2-LSM7 without LSM1 or LSM8; the complex associates with pre-P RNA and snoRNA SNR5.

It is found in the nucleus. It localises to the nucleolus. Its subcellular location is the cytoplasm. Component of LSm protein complexes, which are involved in RNA processing and may function in a chaperone-like manner. Component of the cytoplasmic LSM1-LSM7 complex which is involved in mRNA degradation by activating the decapping step. Together with PAT1, the LSM1-LSM7 complex binds to osmotic stress-activated mRNAs to attenuate the osmotic stress response, probably by limiting ribosome access to the mRNA and consequently translation. Component of the nuclear LSM2-LSM8 complex, which is involved in spliceosome assembly. The LSM2-LSM8 complex plays a role in the biogenesis of the spliceosomal U4/U6-U5 tri-snRNP complex by accelerating PRP24-mediated annealing of U4/U6 di-snRNA. The LSM2-LSM8 complex binds U6 snRNA terminating with a non-cyclic 3' phosphate group. LSM2-LSM8 is probably also involved in degradation of nuclear pre-mRNA by targeting them for decapping. LSM2-LSM8 could be involved in processing of pre-tRNAs, pre-rRNAs and U3 snoRNA, although involvement may be indirect. In a complex that probably contains LSM2-LSM7, but not LSM1 or LSM8, associates with the precursor of the RNA component of RNase P (pre-P RNA) and may be involved in maturing pre-P RNA; the complex also associates with snoRNA SNR5. The sequence is that of LSM complex subunit LSM5 (LSM5) from Saccharomyces cerevisiae (strain ATCC 204508 / S288c) (Baker's yeast).